The primary structure comprises 481 residues: Glutamate--glyoxylate aminotransferase 1 (481 aa).

K291 bears the N6-(pyridoxal phosphate)lysine mark. The Peroxisomal targeting signal signature appears at 479–481 (SKM).

The protein belongs to the class-I pyridoxal-phosphate-dependent aminotransferase family. Alanine aminotransferase subfamily. As to quaternary structure, homodimer. It depends on pyridoxal 5'-phosphate as a cofactor. The N-terminus is blocked. Mostly expressed in leaves, and, to a lower extent, in shoots, stems, flowers, seedlings and green siliques.

It localises to the peroxisome. It carries out the reaction L-alanine + 2-oxoglutarate = pyruvate + L-glutamate. The enzyme catalyses glyoxylate + L-alanine = glycine + pyruvate. The catalysed reaction is glycine + 2-oxoglutarate = glyoxylate + L-glutamate. The protein operates within amino-acid biosynthesis; glycine biosynthesis; glycine from glyoxylate: step 1/1. Its pathway is photosynthesis; C4 acid pathway. It functions in the pathway amino-acid degradation; L-alanine degradation via transaminase pathway; pyruvate from L-alanine: step 1/1. Functionally, catalyzes the glutamate:glyoxylate (GGT or GGAT), alanine:glyoxylate (AGT), alanine:2-oxoglutarate (AKT) and glutamate:pyruvate (GPT) aminotransferase reactions in peroxisomes. Required for abscisic acid (ABA)- and stress-mediated responses in an H(2)O(2)-dependent manner. Functions as a photorespiratory aminotransferase that modulates amino acid content during photorespiration (GGAT activity); promotes serine, glycine and citrulline metabolism in response to light. This is Glutamate--glyoxylate aminotransferase 1 (GGAT1) from Arabidopsis thaliana (Mouse-ear cress).